Reading from the N-terminus, the 200-residue chain is Small ribosomal subunit protein eS8A (200 aa).

2 disordered regions span residues 1-40 (MGIT…RIGP) and 123-145 (SKGK…KHSA). Basic residues predominate over residues 135–145 (KSKHVQRKHSA).

It belongs to the eukaryotic ribosomal protein eS8 family. In terms of assembly, component of the small ribosomal subunit (SSU). Mature yeast ribosomes consist of a small (40S) and a large (60S) subunit. The 40S small subunit contains 1 molecule of ribosomal RNA (18S rRNA) and at least 33 different proteins. The large 60S subunit contains 3 rRNA molecules (25S, 5.8S and 5S rRNA) and at least 46 different proteins.

The protein resides in the cytoplasm. Component of the ribosome, a large ribonucleoprotein complex responsible for the synthesis of proteins in the cell. The small ribosomal subunit (SSU) binds messenger RNAs (mRNAs) and translates the encoded message by selecting cognate aminoacyl-transfer RNA (tRNA) molecules. The large subunit (LSU) contains the ribosomal catalytic site termed the peptidyl transferase center (PTC), which catalyzes the formation of peptide bonds, thereby polymerizing the amino acids delivered by tRNAs into a polypeptide chain. The nascent polypeptides leave the ribosome through a tunnel in the LSU and interact with protein factors that function in enzymatic processing, targeting, and the membrane insertion of nascent chains at the exit of the ribosomal tunnel. The sequence is that of Small ribosomal subunit protein eS8A (rps801) from Schizosaccharomyces pombe (strain 972 / ATCC 24843) (Fission yeast).